Consider the following 84-residue polypeptide: Large ribosomal subunit protein bL27 (84 aa).

Residues 1–21 (MAHKKAGGSTRNGRDSESKRL) form a disordered region.

Belongs to the bacterial ribosomal protein bL27 family.

In Baumannia cicadellinicola subsp. Homalodisca coagulata, this protein is Large ribosomal subunit protein bL27.